Here is a 177-residue protein sequence, read N- to C-terminus: Large ribosomal subunit protein uL5m (177 aa).

It belongs to the universal ribosomal protein uL5 family.

It is found in the mitochondrion. The sequence is that of Large ribosomal subunit protein uL5m (RPL5) from Acanthamoeba castellanii (Amoeba).